Here is a 157-residue protein sequence, read N- to C-terminus: Histone H2B.3 (157 aa).

The segment at Met1–Val64 is disordered. The span at Lys26–Lys42 shows a compositional bias: basic residues. Lys153 is covalently cross-linked (Glycyl lysine isopeptide (Lys-Gly) (interchain with G-Cter in ubiquitin)).

The protein belongs to the histone H2B family. In terms of assembly, the nucleosome is a histone octamer containing two molecules each of H2A, H2B, H3 and H4 assembled in one H3-H4 heterotetramer and two H2A-H2B heterodimers. The octamer wraps approximately 147 bp of DNA. In terms of processing, monoubiquitinated to form H2BK143ub1; may give a specific tag for epigenetic transcriptional activation.

Its subcellular location is the nucleus. It is found in the chromosome. Functionally, core component of nucleosome. Nucleosomes wrap and compact DNA into chromatin, limiting DNA accessibility to the cellular machineries which require DNA as a template. Histones thereby play a central role in transcription regulation, DNA repair, DNA replication and chromosomal stability. DNA accessibility is regulated via a complex set of post-translational modifications of histones, also called histone code, and nucleosome remodeling. The protein is Histone H2B.3 of Volvox carteri (Green alga).